We begin with the raw amino-acid sequence, 350 residues long: Heme A synthase (350 aa).

Transmembrane regions (helical) follow at residues 16–36, 77–97, 101–121, 136–156, 170–190, 201–221, 265–285, and 299–321; these read LARWLFVVAFMVVAIVAVGGI, FQLVNGPAGMTLATYKFIFFW, HRLLARTIGLVFAAPLAWFWI, LLALGALQGAVGWWMVKSGIV, LLVALFTLGGLVWTALDLVAL, GIGLLALAMLVLQLFYGALVA, VFLVHFIHRWWAWAVVAVLVV, and IVLHSVFGTQVLLGIFTVWSGVA. His-272 contacts heme. Position 328 (His-328) interacts with heme.

Belongs to the COX15/CtaA family. Type 2 subfamily. As to quaternary structure, interacts with CtaB. Requires heme b as cofactor.

The protein resides in the cell membrane. It carries out the reaction Fe(II)-heme o + 2 A + H2O = Fe(II)-heme a + 2 AH2. It functions in the pathway porphyrin-containing compound metabolism; heme A biosynthesis; heme A from heme O: step 1/1. Catalyzes the conversion of heme O to heme A by two successive hydroxylations of the methyl group at C8. The first hydroxylation forms heme I, the second hydroxylation results in an unstable dihydroxymethyl group, which spontaneously dehydrates, resulting in the formyl group of heme A. This Novosphingobium aromaticivorans (strain ATCC 700278 / DSM 12444 / CCUG 56034 / CIP 105152 / NBRC 16084 / F199) protein is Heme A synthase.